The primary structure comprises 304 residues: Carbonic anhydrase 5A, mitochondrial (304 aa).

The N-terminal 34 residues, 1–34, are a transit peptide targeting the mitochondrion; that stretch reads MLRAKMLGRGPYKPLAILRHMGPLCATRPQHWRF. In terms of domain architecture, Alpha-carbonic anhydrase spans 35–295; that stretch reads QHSYAEKHSN…LRGRNVRSSF (261 aa). 3 residues coordinate Zn(2+): H129, H131, and H154.

It belongs to the alpha-carbonic anhydrase family. The cofactor is Zn(2+). High in liver, also detected in heart, lung, kidney, spleen and intestine.

It is found in the mitochondrion. The catalysed reaction is hydrogencarbonate + H(+) = CO2 + H2O. Functionally, mitochondrial carbonic anhydrase that catalyzes the reversible conversion of carbon dioxide to bicarbonate/HCO3. Mitochondria are impermeable to HCO3, and thus this intramitochondrial carbonic anhydrase is pivotal in providing HCO3 for multiple mitochondrial enzymes that catalyze the formation of essential metabolites of intermediary metabolism in the urea and Krebs cycles. The sequence is that of Carbonic anhydrase 5A, mitochondrial from Rattus norvegicus (Rat).